Reading from the N-terminus, the 347-residue chain is Protein pelota homolog (347 aa).

It belongs to the eukaryotic release factor 1 family. Pelota subfamily. Monomer. The cofactor is a divalent metal cation.

The protein resides in the cytoplasm. May function in recognizing stalled ribosomes, interact with stem-loop structures in stalled mRNA molecules, and effect endonucleolytic cleavage of the mRNA. May play a role in the release non-functional ribosomes and degradation of damaged mRNAs. Has endoribonuclease activity. This is Protein pelota homolog from Methanothrix thermoacetophila (strain DSM 6194 / JCM 14653 / NBRC 101360 / PT) (Methanosaeta thermophila).